A 100-amino-acid polypeptide reads, in one-letter code: U-myrmeciitoxin(01)-Mg7c (100 aa).

An N-terminal signal peptide occupies residues Met-1–Ala-17. A propeptide spanning residues Ile-18–Pro-50 is cleaved from the precursor. Ser-85 carries O-linked (GalNAc...) serine glycosylation. Residues Thr-94 and Thr-95 are each glycosylated (O-linked (GalNAc...) threonine).

It belongs to the formicidae venom precursor-01 superfamily. Post-translationally, glycosylation is critical to maintaining the aqueous solubility of this protein, but does not directly contribute to its activity. As to expression, expressed by the venom gland.

It localises to the secreted. It is found in the target cell membrane. Its function is as follows. Neurotoxin that triggers pain behavior and inflammation in mammals, and is paralytic and lethal to insects. Causes a time-dependent increase in cell leak current. May act by targeting membranes. The protein is U-myrmeciitoxin(01)-Mg7c of Myrmecia gulosa (Red bulldog ant).